Reading from the N-terminus, the 264-residue chain is U1 snRNP-associated protein usp106 (264 aa).

Positions 83-126 form a coiled coil; that stretch reads DYLEDLERHVDDCNKRIDIAEARREKTKEEEERIDELMRDIIHT. Positions 233 to 258 are enriched in basic and acidic residues; it reads EDREKSRDKKDGEKQRDNLASFEDKI. Positions 233–264 are disordered; the sequence is EDREKSRDKKDGEKQRDNLASFEDKISTSFVA.

This sequence belongs to the Luc7 family. In terms of assembly, component of the U1 snRNP particle, a subcomplex of the spliceosome.

Its subcellular location is the cytoplasm. The protein resides in the nucleus. In terms of biological role, component of the U1 snRNP particle, which recognizes and binds the 5'-splice site of pre-mRNA. Together with other non-snRNP factors, U1 snRNP forms the spliceosomal commitment complex, that targets pre-mRNA to the splicing pathway. The protein is U1 snRNP-associated protein usp106 (usp106) of Schizosaccharomyces pombe (strain 972 / ATCC 24843) (Fission yeast).